Reading from the N-terminus, the 289-residue chain is Enoyl-CoA delta isomerase 1, mitochondrial (289 aa).

The transit peptide at 1-28 (MALAAARRLLLHAGSRLGRREAVDGARR) directs the protein to the mitochondrion. Lys-48 bears the N6-acetyllysine; alternate mark. Residue Lys-48 is modified to N6-succinyllysine; alternate. Lys-71 carries the N6-succinyllysine modification. Lys-76 bears the N6-acetyllysine mark. Substrate contacts are provided by residues 93–97 (AGLDL), Gly-140, and Asn-164. Lys-222, Lys-229, Lys-255, and Lys-270 each carry N6-acetyllysine; alternate. An N6-succinyllysine; alternate mark is found at Lys-222, Lys-229, Lys-255, and Lys-270. Lys-275 is subject to N6-succinyllysine. Lys-283 bears the N6-acetyllysine; alternate mark. At Lys-283 the chain carries N6-succinyllysine; alternate.

The protein belongs to the enoyl-CoA hydratase/isomerase family. As to quaternary structure, homotrimer.

Its subcellular location is the mitochondrion matrix. The enzyme catalyses a (3Z)-enoyl-CoA = a 4-saturated (2E)-enoyl-CoA. It carries out the reaction a (3E)-enoyl-CoA = a 4-saturated (2E)-enoyl-CoA. The catalysed reaction is (3Z)-octenoyl-CoA = (2E)-octenoyl-CoA. It catalyses the reaction (2E)-tetradecenoyl-CoA = (3Z)-tetradecenoyl-CoA. The enzyme catalyses (3Z)-dodecenoyl-CoA = (2E)-dodecenoyl-CoA. It carries out the reaction (3Z)-hexenoyl-CoA = (2E)-hexenoyl-CoA. The catalysed reaction is (3Z)-decenoyl-CoA = (2E)-decenoyl-CoA. It participates in lipid metabolism; fatty acid beta-oxidation. Its function is as follows. Key enzyme of fatty acid beta-oxidation. Able to isomerize both 3-cis (3Z) and 3-trans (3E) double bonds into the 2-trans (2E) form in a range of enoyl-CoA species, with a preference for (3Z)-enoyl-CoAs over (3E)-enoyl-CoAs. The catalytic efficiency of this enzyme is not affected by the fatty acyl chain length. This Mus musculus (Mouse) protein is Enoyl-CoA delta isomerase 1, mitochondrial.